Reading from the N-terminus, the 237-residue chain is MNRKRTIILDTETTGINQTSLPHINHRIIEIGAVEIIDRCFTGNNFHVYIQPGRSIESGALKVHGITNKFLLDKPIFKDIADSFLNYIKNSILVIHNASFDVGFINQELEILNKKIKINTFCSIIDTLKIARELFPGKKNTLDALCTRYKINKSHRNLHSAIVDSYLLGKLYLLMTGGQDSLFSDNTINYKENFKKLKKNIQLKNNTLRILHPTLKENDLHEKYLQYMKDKSTCLWN.

2 residues coordinate a divalent metal cation: D10 and E12. Substrate contacts are provided by D10, E12, and H64. Catalysis depends on H159, which acts as the Proton acceptor. Residue D164 coordinates a divalent metal cation. D164 contributes to the substrate binding site.

The DNA polymerase holoenzyme is a complex that contains 10 different types of subunits. These subunits are organized into 3 functionally essential subassemblies: the pol III core, the beta sliding clamp processivity factor and the clamp-loading complex. The pol III core (subunits alpha,epsilon and theta) contains the polymerase and the 3'-5' exonuclease proofreading activities. The polymerase is tethered to the template via the sliding clamp processivity factor. The clamp-loading complex assembles the beta processivity factor onto the primer template and plays a central role in the organization and communication at the replication fork. This complex contains delta, delta', psi and chi, and copies of either or both of two different DnaX proteins, gamma and tau. The composition of the holoenzyme is, therefore: (alpha,epsilon,theta)[2]-(gamma/tau)[3]-delta,delta', psi,chi-beta[4]. It depends on Mg(2+) as a cofactor. Mn(2+) serves as cofactor.

It catalyses the reaction DNA(n) + a 2'-deoxyribonucleoside 5'-triphosphate = DNA(n+1) + diphosphate. Functionally, DNA polymerase III is a complex, multichain enzyme responsible for most of the replicative synthesis in bacteria. The epsilon subunit contain the editing function and is a proofreading 3'-5' exonuclease. The sequence is that of DNA polymerase III subunit epsilon (dnaQ) from Buchnera aphidicola subsp. Acyrthosiphon pisum (strain APS) (Acyrthosiphon pisum symbiotic bacterium).